The primary structure comprises 396 residues: Elongation factor Tu 2 (396 aa).

In terms of domain architecture, tr-type G spans 10–206 (KPHVNVGTIG…ALDSYIPLPE (197 aa)). Residues 19–26 (GHVDHGKT) form a G1 region. GTP is bound at residue 19 to 26 (GHVDHGKT). T26 is a binding site for Mg(2+). Residues 60 to 64 (GITIN) are G2. The tract at residues 81 to 84 (DCPG) is G3. Residues 81 to 85 (DCPGH) and 136 to 139 (NKCD) contribute to the GTP site. The G4 stretch occupies residues 136-139 (NKCD). The segment at 174–176 (SAK) is G5.

This sequence belongs to the TRAFAC class translation factor GTPase superfamily. Classic translation factor GTPase family. EF-Tu/EF-1A subfamily. As to quaternary structure, monomer.

It is found in the cytoplasm. It carries out the reaction GTP + H2O = GDP + phosphate + H(+). In terms of biological role, GTP hydrolase that promotes the GTP-dependent binding of aminoacyl-tRNA to the A-site of ribosomes during protein biosynthesis. This Albidiferax ferrireducens (strain ATCC BAA-621 / DSM 15236 / T118) (Rhodoferax ferrireducens) protein is Elongation factor Tu 2.